A 185-amino-acid polypeptide reads, in one-letter code: Ribosome-recycling factor (185 aa).

It belongs to the RRF family.

The protein resides in the cytoplasm. Responsible for the release of ribosomes from messenger RNA at the termination of protein biosynthesis. May increase the efficiency of translation by recycling ribosomes from one round of translation to another. The polypeptide is Ribosome-recycling factor (Clavibacter sepedonicus (Clavibacter michiganensis subsp. sepedonicus)).